The following is a 579-amino-acid chain: Protein PLASTID MOVEMENT IMPAIRED 15 (579 aa).

Coiled-coil stretches lie at residues 90–161 (EVLK…NEEH), 188–216 (KVLD…IEIE), 383–419 (QKTK…KLES), and 481–501 (LMKT…EERE).

It belongs to the WEB family.

Required for the chloroplast avoidance response under high intensity blue light. This avoidance response consists in the relocation of chloroplasts on the anticlinal side of exposed cells. This Arabidopsis thaliana (Mouse-ear cress) protein is Protein PLASTID MOVEMENT IMPAIRED 15 (PMI15).